Reading from the N-terminus, the 281-residue chain is NADPH-dependent 7-cyano-7-deazaguanine reductase (281 aa).

A substrate-binding site is contributed by 86–88 (IES). 88-89 (SK) is a binding site for NADPH. C189 (thioimide intermediate) is an active-site residue. Residue D196 is the Proton donor of the active site. 228 to 229 (HE) contacts substrate. 257–258 (RG) lines the NADPH pocket.

This sequence belongs to the GTP cyclohydrolase I family. QueF type 2 subfamily. In terms of assembly, homodimer.

Its subcellular location is the cytoplasm. It catalyses the reaction 7-aminomethyl-7-carbaguanine + 2 NADP(+) = 7-cyano-7-deazaguanine + 2 NADPH + 3 H(+). Its pathway is tRNA modification; tRNA-queuosine biosynthesis. Catalyzes the NADPH-dependent reduction of 7-cyano-7-deazaguanine (preQ0) to 7-aminomethyl-7-deazaguanine (preQ1). The sequence is that of NADPH-dependent 7-cyano-7-deazaguanine reductase from Mannheimia succiniciproducens (strain KCTC 0769BP / MBEL55E).